A 170-amino-acid chain; its full sequence is Cyclic pyranopterin monophosphate synthase (170 aa).

Substrate is bound by residues 89–91 (LCH) and 125–126 (ME). Residue Asp140 is part of the active site.

The protein belongs to the MoaC family. As to quaternary structure, homohexamer; trimer of dimers.

The catalysed reaction is (8S)-3',8-cyclo-7,8-dihydroguanosine 5'-triphosphate = cyclic pyranopterin phosphate + diphosphate. It functions in the pathway cofactor biosynthesis; molybdopterin biosynthesis. Its function is as follows. Catalyzes the conversion of (8S)-3',8-cyclo-7,8-dihydroguanosine 5'-triphosphate to cyclic pyranopterin monophosphate (cPMP). The chain is Cyclic pyranopterin monophosphate synthase from Streptomyces avermitilis (strain ATCC 31267 / DSM 46492 / JCM 5070 / NBRC 14893 / NCIMB 12804 / NRRL 8165 / MA-4680).